We begin with the raw amino-acid sequence, 79 residues long: Secretory calcium-binding phosphoprotein proline-glutamine rich 1 (79 aa).

Positions 1–15 are cleaved as a signal peptide; that stretch reads MKFLILAGLLSTATA.

The protein resides in the secreted. Its function is as follows. Tooth-associated epithelia protein that may participate in structuring the basal lamina at cell-tooth interface. This Homo sapiens (Human) protein is Secretory calcium-binding phosphoprotein proline-glutamine rich 1.